A 244-amino-acid chain; its full sequence is MAKRRGQPLDGVLLLDKPVGLSSNHALQRAKRTLDAAKAGHTGTLDPFATGLLLCCMGRATKISGAMLNADKTYRATLQFGEETDSGDLTGNIVARAPEDFPGVEEANLREVLSRFQGSIEQIPPMYSALKRDGKPLYEYARAGIELERPPRRVMIYRIELLSFTGHQAEIDVACSKGTYIRTLAQDIGRALGCYAHLFALRRTQVGPFSLDRAVTLDALQAMTDPKAALLALNELPAGLLPAT.

Catalysis depends on aspartate 46, which acts as the Nucleophile.

This sequence belongs to the pseudouridine synthase TruB family. Type 1 subfamily.

It carries out the reaction uridine(55) in tRNA = pseudouridine(55) in tRNA. Responsible for synthesis of pseudouridine from uracil-55 in the psi GC loop of transfer RNAs. This chain is tRNA pseudouridine synthase B, found in Bordetella avium (strain 197N).